A 543-amino-acid polypeptide reads, in one-letter code: Early growth response protein 1 (543 aa).

Disordered regions lie at residues methionine 1 to phenylalanine 105, threonine 165 to asparagine 213, and leucine 264 to proline 284. A compositionally biased stretch (low complexity) spans glycine 57–serine 66. The span at serine 67–serine 77 shows a compositional bias: gly residues. Residues proline 167–proline 189 show a composition bias toward low complexity. A Glycyl lysine isopeptide (Lys-Gly) (interchain with G-Cter in SUMO2) cross-link involves residue lysine 305. The segment at proline 318–alanine 339 is disordered. C2H2-type zinc fingers lie at residues tyrosine 338–histidine 362, phenylalanine 368–histidine 390, and phenylalanine 396–histidine 418. The tract at residues aspartate 409–histidine 487 is disordered. Over residues arginine 413–aspartate 423 the composition is skewed to basic residues. The span at serine 429–valine 486 shows a compositional bias: low complexity.

It belongs to the EGR C2H2-type zinc-finger protein family. Interacts with SNAI1 and SP1 upon 12-O-tetradecanoylphorbol-13-acetate (TPA) induction. In terms of tissue distribution, detected in neutrophils (at protein level).

The protein resides in the nucleus. Its subcellular location is the cytoplasm. In terms of biological role, transcriptional regulator. Recognizes and binds to the DNA sequence 5'-GCG(T/G)GGGCG-3'(EGR-site) in the promoter region of target genes. Binds double-stranded target DNA, irrespective of the cytosine methylation status. Regulates the transcription of numerous target genes, and thereby plays an important role in regulating the response to growth factors, DNA damage, and ischemia. Plays a role in the regulation of cell survival, proliferation and cell death. Activates expression of p53/TP53 and TGFB1, and thereby helps prevent tumor formation. Required for normal progress through mitosis and normal proliferation of hepatocytes after partial hepatectomy. Mediates responses to ischemia and hypoxia; regulates the expression of proteins such as IL1B and CXCL2 that are involved in inflammatory processes and development of tissue damage after ischemia. Regulates biosynthesis of luteinizing hormone (LHB) in the pituitary. Regulates the amplitude of the expression rhythms of clock genes: BMAL1, PER2 and NR1D1 in the liver via the activation of PER1 (clock repressor) transcription. Regulates the rhythmic expression of core-clock gene BMAL1 in the suprachiasmatic nucleus (SCN). The chain is Early growth response protein 1 (EGR1) from Homo sapiens (Human).